We begin with the raw amino-acid sequence, 100 residues long: Integration host factor subunit alpha (100 aa).

The protein belongs to the bacterial histone-like protein family. Heterodimer of an alpha and a beta chain.

Its function is as follows. This protein is one of the two subunits of integration host factor, a specific DNA-binding protein that functions in genetic recombination as well as in transcriptional and translational control. This Erythrobacter litoralis (strain HTCC2594) protein is Integration host factor subunit alpha.